Here is a 245-residue protein sequence, read N- to C-terminus: tRNA (guanine-N(1)-)-methyltransferase (245 aa).

S-adenosyl-L-methionine-binding positions include G114 and L133 to I138.

It belongs to the RNA methyltransferase TrmD family. Homodimer.

The protein localises to the cytoplasm. The enzyme catalyses guanosine(37) in tRNA + S-adenosyl-L-methionine = N(1)-methylguanosine(37) in tRNA + S-adenosyl-L-homocysteine + H(+). Specifically methylates guanosine-37 in various tRNAs. The protein is tRNA (guanine-N(1)-)-methyltransferase of Pediococcus pentosaceus (strain ATCC 25745 / CCUG 21536 / LMG 10740 / 183-1w).